The chain runs to 146 residues: Hemoglobin subunit beta-2 (146 aa).

The Globin domain maps to 2–146 (EWTDFERATI…VVSALGRQYH (145 aa)). Residues histidine 63 and histidine 92 each coordinate heme b.

This sequence belongs to the globin family. As to quaternary structure, hb3 is a heterotetramer of two alpha-2 chains and two beta-2 chains. Red blood cells.

Functionally, involved in oxygen transport from gills to the various peripheral tissues. This chain is Hemoglobin subunit beta-2 (hbb2), found in Anarhichas minor (Arctic spotted wolffish).